A 447-amino-acid polypeptide reads, in one-letter code: tRNA-2-methylthio-N(6)-dimethylallyladenosine synthase (447 aa).

The MTTase N-terminal domain occupies 1 to 116 (MYIRTFGCQM…LPDLIKRRRA (116 aa)). [4Fe-4S] cluster is bound by residues cysteine 8, cysteine 45, cysteine 79, cysteine 153, cysteine 157, and cysteine 160. Positions 139–372 (RVDGATAFVS…QALINQQAAA (234 aa)) constitute a Radical SAM core domain. In terms of domain architecture, TRAM spans 375–438 (QGMIGTRQRV…TNSLRGRVAG (64 aa)).

The protein belongs to the methylthiotransferase family. MiaB subfamily. In terms of assembly, monomer. Requires [4Fe-4S] cluster as cofactor.

The protein resides in the cytoplasm. It catalyses the reaction N(6)-dimethylallyladenosine(37) in tRNA + (sulfur carrier)-SH + AH2 + 2 S-adenosyl-L-methionine = 2-methylsulfanyl-N(6)-dimethylallyladenosine(37) in tRNA + (sulfur carrier)-H + 5'-deoxyadenosine + L-methionine + A + S-adenosyl-L-homocysteine + 2 H(+). Functionally, catalyzes the methylthiolation of N6-(dimethylallyl)adenosine (i(6)A), leading to the formation of 2-methylthio-N6-(dimethylallyl)adenosine (ms(2)i(6)A) at position 37 in tRNAs that read codons beginning with uridine. This is tRNA-2-methylthio-N(6)-dimethylallyladenosine synthase from Bordetella pertussis (strain Tohama I / ATCC BAA-589 / NCTC 13251).